Consider the following 615-residue polypeptide: Filament-like plant protein 3 (615 aa).

Positions 1 to 18 (MDRRSWLWRRKSSEKSPG) are enriched in basic and acidic residues. Positions 1 to 55 (MDRRSWLWRRKSSEKSPGETESTGSVSSHSERFSDDQRSQSPELNSKPVTREEEA) are disordered. The segment covering 19–28 (ETESTGSVSS) has biased composition (polar residues). Residues 29–38 (HSERFSDDQR) are compositionally biased toward basic and acidic residues. Residues 39–48 (SQSPELNSKP) show a composition bias toward polar residues. Coiled-coil stretches lie at residues 87 to 121 (AEEA…LEDR) and 148 to 211 (EEAI…KSEE). Disordered regions lie at residues 258-289 (DNSS…SPSE) and 319-343 (PHSE…HVNQ). Residues 262 to 288 (DLKSSIDNQSDYSGRVSFSDNEMQSPS) show a composition bias toward polar residues. Residues 322 to 343 (EPGRKHSESNKELEKSNAHVNQ) show a composition bias toward basic and acidic residues. Residues 327-563 (HSESNKELEK…KQELEHHQET (237 aa)) are a coiled coil.

It belongs to the FPP family. In terms of assembly, interacts with WPP/MAF proteins. Binds to COG2; this interaction promotes the association between cortical microtubules and EXO70A1. In terms of tissue distribution, accumulates in preferentially xylem cells.

The protein resides in the vesicle. In terms of biological role, ensures, when in complex with COG2 and FPP2/VETH2, the correct secondary cell wall (SCW) deposition pattern by recruiting exocyst components to cortical microtubules in xylem cells during secondary cell wall deposition by recruiting EXO70A1. This chain is Filament-like plant protein 3, found in Arabidopsis thaliana (Mouse-ear cress).